We begin with the raw amino-acid sequence, 294 residues long: Non-selective voltage-gated ion channel VDAC2 (294 aa).

Position 2 is an N-acetylalanine (Ala2). Residues Lys23 and Lys31 each contribute to the ATP site. N6-acetyllysine; alternate is present on Lys31. An N6-succinyllysine; alternate modification is found at Lys31. Lys31 participates in a covalent cross-link: Glycyl lysine isopeptide (Lys-Gly) (interchain with G-Cter in ubiquitin); alternate. 2 consecutive transmembrane segments (beta stranded) span residues Leu37–Ser46 and Val50–Ser58. Lys64 is covalently cross-linked (Glycyl lysine isopeptide (Lys-Gly) (interchain with G-Cter in ubiquitin)). A beta stranded membrane pass occupies residues Val65–Trp75. A Phosphotyrosine modification is found at Tyr78. Transmembrane regions (beta stranded) follow at residues Leu80–Asn87, Thr91–Asp100, and Leu106–Ser115. Phosphothreonine is present on Thr118. Residue Lys120 is modified to N6-acetyllysine; alternate. Lys120 is covalently cross-linked (Glycyl lysine isopeptide (Lys-Gly) (interchain with G-Cter in ubiquitin); alternate). A Glycyl lysine isopeptide (Lys-Gly) (interchain with G-Cter in ubiquitin) cross-link involves residue Lys121. The next 4 membrane-spanning stretches (beta stranded) occupy residues Ser122–Arg131, Ile134–Asp141, Ala148–Gly156, and Leu161–Asp169. A Glycyl lysine isopeptide (Lys-Gly) (interchain with G-Cter in ubiquitin) cross-link involves residue Lys172. 6 beta stranded membrane passes run Lys174–Thr186, Phe189–Asn196, Glu200–Val209, Leu213–Thr222, Arg229–Leu238, and Ala242–Asn249. Ser251 is modified (phosphoserine). Residues Leu253 to Gly255 and Ser271 to Asp275 each bind NAD(+). 2 consecutive transmembrane segments (beta stranded) span residues Leu253–Leu262 and Gly265–Val274. Lys277 bears the N6-acetyllysine; alternate mark. Residue Lys277 forms a Glycyl lysine isopeptide (Lys-Gly) (interchain with G-Cter in ubiquitin); alternate linkage. The beta stranded transmembrane segment at His284–Glu293 threads the bilayer.

It belongs to the eukaryotic mitochondrial porin family. Monomer, homodimer and higher order oligomers; formation of higher order structures is necessary for scramblase activity. Interacts with ARMC12 in a TBC1D21-dependent manner. Interacts with KLC3. Interacts with SPATA33. Interacts with PPP3CC in a SPATA33-dependent manner. Post-translationally, ubiquitinated by PRKN during mitophagy, leading to its degradation and enhancement of mitophagy. Deubiquitinated by USP30.

The protein localises to the mitochondrion outer membrane. The protein resides in the membrane. It catalyses the reaction chloride(in) = chloride(out). The enzyme catalyses K(+)(in) = K(+)(out). The catalysed reaction is a 1,2-diacyl-sn-glycero-3-phospho-L-serine(in) = a 1,2-diacyl-sn-glycero-3-phospho-L-serine(out). It carries out the reaction a 1,2-diacyl-sn-glycero-3-phosphocholine(in) = a 1,2-diacyl-sn-glycero-3-phosphocholine(out). It catalyses the reaction a 1,2-diacyl-sn-glycero-3-phospho-(1D-myo-inositol)(in) = a 1,2-diacyl-sn-glycero-3-phospho-(1D-myo-inositol)(out). Functionally, non-selective voltage-gated ion channel that mediates the transport of anions and cations through the mitochondrion outer membrane and plasma membrane. The channel adopts an open conformation at zero mV and a closed conformation at both positive and negative potentials. There are two populations of channels; the main that functions in a lower open-state conductance with lower ion selectivity, that switch, in a voltage-dependent manner, from the open to a low-conducting 'closed' state and the other that has a normal ion selectivity in the typical high conductance, 'open' state. Binds various lipids, including the sphingolipid ceramide, the phospholipid phosphatidylcholine, and the sterols cholesterol and oxysterol. Binding of ceramide promotes the mitochondrial outer membrane permeabilization (MOMP) apoptotic pathway. Its function is as follows. Catalyzes the scrambling of phospholipids across the outer mitochondrial membrane; the mechanism is unrelated to channel activity and is capable of translocating both anionic and zwitterionic phospholipids. This Oryctolagus cuniculus (Rabbit) protein is Non-selective voltage-gated ion channel VDAC2.